Reading from the N-terminus, the 282-residue chain is Bifunctional protein FolD (282 aa).

NADP(+) contacts are provided by residues asparagine 165–serine 167, serine 190, and isoleucine 231.

The protein belongs to the tetrahydrofolate dehydrogenase/cyclohydrolase family. As to quaternary structure, homodimer.

The enzyme catalyses (6R)-5,10-methylene-5,6,7,8-tetrahydrofolate + NADP(+) = (6R)-5,10-methenyltetrahydrofolate + NADPH. The catalysed reaction is (6R)-5,10-methenyltetrahydrofolate + H2O = (6R)-10-formyltetrahydrofolate + H(+). Its pathway is one-carbon metabolism; tetrahydrofolate interconversion. Its function is as follows. Catalyzes the oxidation of 5,10-methylenetetrahydrofolate to 5,10-methenyltetrahydrofolate and then the hydrolysis of 5,10-methenyltetrahydrofolate to 10-formyltetrahydrofolate. This is Bifunctional protein FolD from Clostridium botulinum (strain ATCC 19397 / Type A).